A 424-amino-acid chain; its full sequence is UPF0597 protein Ssed_2537 (424 aa).

Belongs to the UPF0597 family.

The chain is UPF0597 protein Ssed_2537 from Shewanella sediminis (strain HAW-EB3).